The primary structure comprises 1127 residues: Ras guanine nucleotide exchange factor F (1127 aa).

Disordered stretches follow at residues 1–82 and 96–154; these read MTDK…SLLN and NSGG…SSSS. Low complexity-rich tracts occupy residues 23–53 and 67–82; these read NQPS…TTSP and NNNN…SLLN. A compositionally biased stretch (polar residues) spans 122-132; it reads RTSTTLAQFSG. Over residues 133-154 the composition is skewed to low complexity; sequence SSLPNTENSSPPPSSSLISSSS. 5 Kelch repeats span residues 212-261, 262-311, 313-366, 367-418, and 420-469; these read GFYL…LYNN, SMYI…VESG, MIVF…MHKG, NMYV…LFQD, and IFIS…VKGN. In terms of domain architecture, LisH spans 557–589; that stretch reads SHQFVLQLIMEYLERNTYHKVIAAIQKESGVLH. Positions 673–804 constitute an N-terminal Ras-GEF domain; that stretch reads NKVQIKAATF…KLRELKKKLQ (132 aa). Positions 835–1062 constitute a Ras-GEF domain; that stretch reads DELEIARQMT…YDLNLLSESL (228 aa). Positions 1090–1127 are disordered; that stretch reads LGSARELNNSNRDSNNITGSSSNNNSNSSNSLSPIVKL. A compositionally biased stretch (low complexity) spans 1103 to 1127; it reads SNNITGSSSNNNSNSSNSLSPIVKL.

In terms of biological role, promotes the exchange of Ras-bound GDP by GTP. This Dictyostelium discoideum (Social amoeba) protein is Ras guanine nucleotide exchange factor F (gefF).